A 214-amino-acid chain; its full sequence is Ribosomal RNA small subunit methyltransferase G (214 aa).

Residues G81, M86, 132 to 133 (VE), and R147 contribute to the S-adenosyl-L-methionine site.

It belongs to the methyltransferase superfamily. RNA methyltransferase RsmG family.

It is found in the cytoplasm. The enzyme catalyses guanosine(527) in 16S rRNA + S-adenosyl-L-methionine = N(7)-methylguanosine(527) in 16S rRNA + S-adenosyl-L-homocysteine. In terms of biological role, specifically methylates the N7 position of guanine in position 527 of 16S rRNA. In Pseudomonas aeruginosa (strain LESB58), this protein is Ribosomal RNA small subunit methyltransferase G.